The following is a 240-amino-acid chain: Probable transcriptional regulatory protein VFMJ11_A0186 (240 aa).

This sequence belongs to the TACO1 family.

It is found in the cytoplasm. This chain is Probable transcriptional regulatory protein VFMJ11_A0186, found in Aliivibrio fischeri (strain MJ11) (Vibrio fischeri).